Consider the following 646-residue polypeptide: WW domain-containing adapter protein with coiled-coil (646 aa).

Positions 1-138 (MVMYARKQQR…YDSADDWSEH (138 aa)) are disordered. Over residues 23 to 37 (QPFQALKYSSKSHPS) the composition is skewed to polar residues. The span at 38-50 (SGDHRHEKMRDAA) shows a compositional bias: basic and acidic residues. Phosphoserine is present on serine 53. Positions 61 to 75 (RSNSPENKYSDSTGH) are enriched in polar residues. A compositionally biased stretch (low complexity) spans 103–122 (NHSALHSSNSHSSNPSNNPS). One can recognise a WW domain in the interval 129 to 162 (YDSADDWSEHISSSGKKYYYNCRTEVSQWEKPKE). Phosphoserine is present on residues serine 131 and serine 142. Basic and acidic residues-rich tracts occupy residues 158–174 (EKPK…KEAN) and 182–191 (PKDRDYRREV). 2 disordered regions span residues 158–352 (EKPK…PQST) and 428–541 (TQAQ…TATV). The segment covering 211 to 225 (DASSLLPQNILSQTS) has biased composition (polar residues). The residue at position 225 (serine 225) is a Phosphoserine. Residues 226-239 (RHNDKDYRLPRAET) are compositionally biased toward basic and acidic residues. A compositionally biased stretch (low complexity) spans 252–267 (PVVHPTATPSTVPSSP). Residues 284 to 300 (GASTLSKLPTPTASLPA) show a composition bias toward polar residues. At threonine 293 the chain carries Phosphothreonine. Lysine 302 is subject to N6-acetyllysine. The span at 316 to 331 (SHSCTTPSTSSASGLN) shows a compositional bias: polar residues. The segment covering 332-351 (PTSAPPTSASAVPVSPVPQS) has biased composition (low complexity). The segment covering 428-463 (TQAQPSNQSPMSLTSDASSPRSYVSPRISTPQTNTV) has biased composition (polar residues). Serine 446 is subject to Phosphoserine. Phosphothreonine is present on threonine 471. Over residues 490 to 503 (VSHSATQQPVTADK) the composition is skewed to polar residues. Residues serine 511, serine 523, and serine 525 each carry the phosphoserine modification. Residues 511–524 (SPRSLQRLSSQRSP) are compositionally biased toward low complexity. A compositionally biased stretch (polar residues) spans 528–541 (PNHTCSSNASTATV). Positions 617–643 (QATLREQRILFLRQQIKELEKLKNQNS) form a coiled coil.

Interacts (via coiled coil domain) with RNF20, RNF40 and UBE2A. Interacts (via WW domain) with RNA polymerase II. Interacts with MTOR and other components of the MTOR pathway including RPTOR, RUVBL1, RUVBL2, TTI1 and TTI2. Phosphorylated on tyrosine residues.

It is found in the nucleus speckle. Its subcellular location is the nucleus. Its function is as follows. Acts as a linker between gene transcription and histone H2B monoubiquitination at 'Lys-120' (H2BK120ub1). Interacts with the RNA polymerase II transcriptional machinery via its WW domain and with RNF20-RNF40 via its coiled coil region, thereby linking and regulating H2BK120ub1 and gene transcription. Regulates the cell-cycle checkpoint activation in response to DNA damage. Positive regulator of amino acid starvation-induced autophagy. Also acts as a negative regulator of basal autophagy. Positively regulates MTOR activity by promoting, in an energy-dependent manner, the assembly of the TTT complex composed of TELO2, TTI1 and TTI2 and the RUVBL complex composed of RUVBL1 and RUVBL2 into the TTT-RUVBL complex. This leads to the dimerization of the mTORC1 complex and its subsequent activation. May negatively regulate the ubiquitin proteasome pathway. This Mus musculus (Mouse) protein is WW domain-containing adapter protein with coiled-coil (Wac).